The chain runs to 59 residues: Large ribosomal subunit protein bL32 (59 aa).

This sequence belongs to the bacterial ribosomal protein bL32 family.

This Rhizorhabdus wittichii (strain DSM 6014 / CCUG 31198 / JCM 15750 / NBRC 105917 / EY 4224 / RW1) (Sphingomonas wittichii) protein is Large ribosomal subunit protein bL32.